The chain runs to 132 residues: Agouti-signaling protein (132 aa).

An N-terminal signal peptide occupies residues 1–22 (MDVTRLLLATLLVFLCFFTAYS). The N-linked (GlcNAc...) asparagine glycan is linked to Asn39. The segment at 60 to 88 (KQISRKEAEKKRSSKKEASMKKVARPRTP) is disordered. Over residues 63–79 (SRKEAEKKRSSKKEASM) the composition is skewed to basic and acidic residues. 5 disulfides stabilise this stretch: Cys93–Cys108, Cys100–Cys114, Cys107–Cys125, Cys111–Cys132, and Cys116–Cys123. The Agouti domain maps to 93 to 132 (CVATRDSCKPPAPACCDPCASCQCRFFRSACSCRVLSLNC).

It is found in the secreted. In terms of biological role, involved in the regulation of melanogenesis. The binding of ASP to MC1R precludes alpha-MSH initiated signaling and thus blocks production of cAMP, leading to a down-regulation of eumelanogenesis (brown/black pigment) and thus increasing synthesis of pheomelanin (yellow/red pigment). The protein is Agouti-signaling protein (ASIP) of Macaca cyclopis (Taiwan macaque).